The following is a 360-amino-acid chain: Spore germination protein GerQB (360 aa).

10 helical membrane passes run 11–31 (SPYMVFFLIITIQMGVGMLGF), 45–65 (ISTLLFGISVNVMIWIIYQIL), 84–104 (IGGLLNFIFLSYIVLLGATTL), 116–136 (FPSISSWVIAGAFLGLCYYIV), 142–162 (VVAGIGFFGIVIPSILIFTFF), 188–208 (MKGNMFSFFGFEMLLLYYPFI), 220–240 (YANLVTTIVYTYLMILTLAFF), 270–290 (IIVSVWAFFILPNVSFTLWGV), 300–320 (IKQKYVLPVIILFIFILSFFL), and 331–351 (TWTGQIGFVYIYVYLPVLWLI).

It belongs to the amino acid-polyamine-organocation (APC) superfamily. Spore germination protein (SGP) (TC 2.A.3.9) family.

The protein resides in the membrane. In terms of biological role, required for the germination response to inosine. Has no role in L-alanine germination. The chain is Spore germination protein GerQB (gerQB) from Bacillus cereus.